Here is a 312-residue protein sequence, read N- to C-terminus: Phosphoribosylglycinamide formyltransferase, chloroplastic (312 aa).

The transit peptide at 1-73 directs the protein to the chloroplast; sequence MEAQQIISRF…EVCSSSWRIW (73 aa). 109–111 is a N(1)-(5-phospho-beta-D-ribosyl)glycinamide binding site; that stretch reads GSN. Residues Lys-162, 187–190, and Asn-204 contribute to the (6R)-10-formyltetrahydrofolate site; that span reads LKLI. Catalysis depends on His-206, which acts as the Proton donor. Asp-247 contacts (6R)-10-formyltetrahydrofolate. Glu-276 contacts N(1)-(5-phospho-beta-D-ribosyl)glycinamide.

The protein belongs to the GART family.

Its subcellular location is the plastid. It localises to the chloroplast. It carries out the reaction N(1)-(5-phospho-beta-D-ribosyl)glycinamide + (6R)-10-formyltetrahydrofolate = N(2)-formyl-N(1)-(5-phospho-beta-D-ribosyl)glycinamide + (6S)-5,6,7,8-tetrahydrofolate + H(+). It functions in the pathway purine metabolism; IMP biosynthesis via de novo pathway; N(2)-formyl-N(1)-(5-phospho-D-ribosyl)glycinamide from N(1)-(5-phospho-D-ribosyl)glycinamide (10-formyl THF route): step 1/1. The sequence is that of Phosphoribosylglycinamide formyltransferase, chloroplastic (PUR3) from Vigna unguiculata (Cowpea).